The following is a 334-amino-acid chain: Phosphate acyltransferase (334 aa).

Belongs to the PlsX family. As to quaternary structure, homodimer. Probably interacts with PlsY.

Its subcellular location is the cytoplasm. The enzyme catalyses a fatty acyl-[ACP] + phosphate = an acyl phosphate + holo-[ACP]. The protein operates within lipid metabolism; phospholipid metabolism. Catalyzes the reversible formation of acyl-phosphate (acyl-PO(4)) from acyl-[acyl-carrier-protein] (acyl-ACP). This enzyme utilizes acyl-ACP as fatty acyl donor, but not acyl-CoA. The polypeptide is Phosphate acyltransferase (Mycoplasmopsis agalactiae (strain NCTC 10123 / CIP 59.7 / PG2) (Mycoplasma agalactiae)).